The chain runs to 380 residues: Endo-chitosanase C (380 aa).

Residues 1-22 (MPIKSFASRLALSLAICGTAMG) form the signal peptide. The stretch at 276 to 304 (CSWPGHCAGATCSSNDDCSDDLTCQNGKC) is one R3-1 repeat. The stretch at 311 to 341 (ETCSWEGHCKGATCSSNDDCSDELACISGIC) is one R3-2 repeat. Residues 348–378 (ETCEWEGHCEGASCSSHDDCDGNLACKNGKC) form an R3-3 repeat.

Belongs to the glycosyl hydrolase 75 family.

It is found in the secreted. The catalysed reaction is Endohydrolysis of beta-(1-&gt;4)-linkages between D-glucosamine residues in a partly acetylated chitosan.. Its function is as follows. Chitosanase catalyzing the endo-type cleavage of chitosan, the deacylated form of chitin. Chitosanase may be crucial in the degradation of the deacetylated portion of chitin in the fungal cell wall. Chitoolisaccharides produced by the hydrolysis of partially N-acetylated chitosan are known to have many biological activities, including antibacterial activity, immune-enhancing effects, and elicitor activity. The chain is Endo-chitosanase C (csnC) from Aspergillus oryzae (Yellow koji mold).